The following is a 40-amino-acid chain: Large ribosomal subunit protein bL33c (40 aa).

This sequence belongs to the bacterial ribosomal protein bL33 family.

Its subcellular location is the plastid. It is found in the chloroplast. This is Large ribosomal subunit protein bL33c (rpl33) from Pisum sativum (Garden pea).